We begin with the raw amino-acid sequence, 564 residues long: 4-coumarate--CoA ligase 1 (564 aa).

ATP is bound by residues serine 209, serine 210, glycine 211, threonine 212, threonine 213, and lysine 217. Positions 259 and 263 each coordinate (E)-4-coumaroyl-AMP. Residue arginine 280 participates in CoA binding. Residues aspartate 282 to glutamine 351 are SBD1. Positions 329, 351, 352, 356, and 364 each coordinate (E)-4-coumaroyl-AMP. ATP contacts are provided by glutamine 351, glycine 352, and threonine 356. Residues glycine 352–tyrosine 419 form an SBD2 region. ATP-binding residues include aspartate 440 and arginine 455. The (E)-4-coumaroyl-AMP site is built by lysine 457 and lysine 461. CoA-binding residues include arginine 463 and glycine 464. Lysine 547 provides a ligand contact to ATP.

This sequence belongs to the ATP-dependent AMP-binding enzyme family. The cofactor is Mg(2+). In terms of tissue distribution, expressed in roots, stems, leaf blades and leaf sheaths.

The enzyme catalyses (E)-ferulate + ATP + CoA = (E)-feruloyl-CoA + AMP + diphosphate. It catalyses the reaction (E)-4-coumarate + ATP + CoA = (E)-4-coumaroyl-CoA + AMP + diphosphate. It carries out the reaction (E)-cinnamate + ATP + CoA = (E)-cinnamoyl-CoA + AMP + diphosphate. The catalysed reaction is (E)-caffeate + ATP + CoA = (E)-caffeoyl-CoA + AMP + diphosphate. The enzyme catalyses (E)-ferulate + ATP + H(+) = (E)-feruloyl-AMP + diphosphate. It catalyses the reaction (E)-feruloyl-AMP + CoA = (E)-feruloyl-CoA + AMP + H(+). It carries out the reaction (E)-4-coumarate + ATP + H(+) = (E)-4-coumaroyl-AMP + diphosphate. The catalysed reaction is (E)-4-coumaroyl-AMP + CoA = (E)-4-coumaroyl-CoA + AMP + H(+). The enzyme catalyses (E)-caffeate + ATP + H(+) = (E)-caffeoyl-AMP + diphosphate. It catalyses the reaction (E)-caffeoyl-AMP + CoA = (E)-caffeoyl-CoA + AMP + H(+). The protein operates within phytoalexin biosynthesis; 3,4',5-trihydroxystilbene biosynthesis; 3,4',5-trihydroxystilbene from trans-4-coumarate: step 1/2. Its function is as follows. Involved in the phenylpropanoid metabolism by mediating the activation of a number of hydroxycinnamates for the biosynthesis of monolignols and other phenolic secondary metabolites. Catalyzes the formation of CoA esters of cinnamate, 4-coumarate, caffeate and ferulate. Is more efficient with substrates in the following order: ferulate &gt; 4-coumarate &gt; cinnamate &gt; caffeate. Cannot convert sinapate to its corresponding CoA ester. Follows a two-step reaction mechanism, wherein the carboxylate substrate first undergoes adenylation by ATP, followed by a thioesterification in the presence of CoA to yield the final CoA thioester. The protein is 4-coumarate--CoA ligase 1 of Oryza sativa subsp. japonica (Rice).